A 2617-amino-acid polypeptide reads, in one-letter code: DNA-directed RNA polymerase subunit beta'' (2617 aa).

Zn(2+) is bound by residues Cys-263, Cys-334, Cys-341, and Cys-344.

It belongs to the RNA polymerase beta' chain family. RpoC2 subfamily. In terms of assembly, in plastids the minimal PEP RNA polymerase catalytic core is composed of four subunits: alpha, beta, beta', and beta''. When a (nuclear-encoded) sigma factor is associated with the core the holoenzyme is formed, which can initiate transcription. The cofactor is Zn(2+).

Its subcellular location is the plastid. It is found in the chloroplast. It catalyses the reaction RNA(n) + a ribonucleoside 5'-triphosphate = RNA(n+1) + diphosphate. DNA-dependent RNA polymerase catalyzes the transcription of DNA into RNA using the four ribonucleoside triphosphates as substrates. The protein is DNA-directed RNA polymerase subunit beta'' of Oedogonium cardiacum (Filamentous green alga).